Here is a 177-residue protein sequence, read N- to C-terminus: 2''-aminoglycoside nucleotidyltransferase (177 aa).

The interval 1–92 is N-terminal domain; the sequence is MDTTQVTLIH…ELLDCEPAWW (92 aa). Residues D44, D46, and D86 each contribute to the Mg(2+) site. The active-site Proton acceptor is D86. A C-terminal domain region spans residues 93–177; it reads ADEAYEIAEA…RAAFRSRYAA (85 aa). A100 contacts kanamycin A.

As to quaternary structure, monomer. The cofactor is Mg(2+).

The enzyme catalyses nucleoside triphosphate + gentamicin = diphosphate + 2''-nucleotidylgentamicin.. Its function is as follows. Mediates bacterial resistance to kanamycin, gentamicin, dibekacin, sisomicin and tobramycin by adenylating the 2''-hydroxyl group of these antibiotics. The polypeptide is 2''-aminoglycoside nucleotidyltransferase (Klebsiella pneumoniae).